A 474-amino-acid chain; its full sequence is Sporulation-specific protein 6 (474 aa).

The 54-residue stretch at 125-178 folds into the BRCT domain; the sequence is RLAFPNFIFYFDNVDEEIKRRVTQKINNLGAKVATLFTFEVTHFITTRTTDPEM. The DBF4-type zinc-finger motif lies at 421–470; that stretch reads IETKSGYCENCCERYKDLERHLGGKHHRRFAEKDENFQGLDDLFLLIRRP. Cysteine 428, cysteine 431, histidine 441, and histidine 447 together coordinate Zn(2+).

It localises to the nucleus. In terms of biological role, may act as a kinase regulator. Essential for progression of meiosis II and sporulation. The protein is Sporulation-specific protein 6 (spo6) of Schizosaccharomyces pombe (strain 972 / ATCC 24843) (Fission yeast).